Reading from the N-terminus, the 434-residue chain is Bestrophin homolog 12 (434 aa).

The next 4 membrane-spanning stretches (helical) occupy residues 31 to 51 (KVIL…FLVF), 76 to 96 (VCIP…DQWE), 244 to 264 (IPIP…YFFF), and 278 to 298 (WALS…FLVG).

This sequence belongs to the anion channel-forming bestrophin (TC 1.A.46) family. Calcium-sensitive chloride channel subfamily. Forms oligomers.

It is found in the cell membrane. Functionally, forms chloride channels. The protein is Bestrophin homolog 12 (best-12) of Caenorhabditis elegans.